Here is a 94-residue protein sequence, read N- to C-terminus: PqqA binding protein (94 aa).

The protein belongs to the PqqD family. As to quaternary structure, monomer. Interacts with PqqE.

It functions in the pathway cofactor biosynthesis; pyrroloquinoline quinone biosynthesis. In terms of biological role, functions as a PqqA binding protein and presents PqqA to PqqE, in the pyrroloquinoline quinone (PQQ) biosynthetic pathway. The chain is PqqA binding protein from Pseudomonas syringae pv. syringae (strain B728a).